The sequence spans 374 residues: Protein RecA (374 aa).

77–84 is a binding site for ATP; it reads GPESSGKT. The interval 355–374 is disordered; the sequence is AAKTAAADKSAPAKASEAAA.

Belongs to the RecA family.

It is found in the cytoplasm. Functionally, can catalyze the hydrolysis of ATP in the presence of single-stranded DNA, the ATP-dependent uptake of single-stranded DNA by duplex DNA, and the ATP-dependent hybridization of homologous single-stranded DNAs. It interacts with LexA causing its activation and leading to its autocatalytic cleavage. The polypeptide is Protein RecA (Synechococcus sp. (strain CC9605)).